The chain runs to 998 residues: General transcription factor II-I (998 aa).

Ala-2 bears the N-acetylalanine mark. Phosphoserine is present on Ser-19. Residues Lys-35, Lys-86, Lys-92, and Lys-94 each participate in a glycyl lysine isopeptide (Lys-Gly) (interchain with G-Cter in SUMO2) cross-link. Residue Ser-103 is modified to Phosphoserine. The stretch at 103-197 is one GTF2I-like 1 repeat; the sequence is SVDAVEIETL…FLEPKKHVGG (95 aa). An N6-acetyllysine; alternate modification is found at Lys-130. A Glycyl lysine isopeptide (Lys-Gly) (interchain with G-Cter in SUMO2); alternate cross-link involves residue Lys-130. Residues Lys-140 and Lys-185 each participate in a glycyl lysine isopeptide (Lys-Gly) (interchain with G-Cter in SUMO2) cross-link. Residues Ser-207, Ser-210, and Ser-214 each carry the phosphoserine modification. Lys-219 participates in a covalent cross-link: Glycyl lysine isopeptide (Lys-Gly) (interchain with G-Cter in SUMO2). A Glycyl lysine isopeptide (Lys-Gly) (interchain with G-Cter in SUMO2); alternate cross-link involves residue Lys-221. Lys-221 participates in a covalent cross-link: Glycyl lysine isopeptide (Lys-Gly) (interchain with G-Cter in SUMO1); alternate. A disordered region spans residues 241–342; the sequence is EESEDPDYYQ…PPVPEPANAG (102 aa). A Phosphotyrosine; by BTK modification is found at Tyr-248. His-278 and His-298 each carry phosphoserine. The segment covering 303–318 has biased composition (acidic residues); it reads TSEDPEVEVTIEDDDY. A Nuclear localization signal motif is present at residues 320–327; the sequence is PPSKRPKA. Glycyl lysine isopeptide (Lys-Gly) (interchain with G-Cter in SUMO2) cross-links involve residues Lys-326 and Lys-343. A GTF2I-like 2 repeat occupies 352–446; sequence EKWNARITDL…ELLNSTREDL (95 aa). N6-acetyllysine; alternate is present on Lys-353. Residue Lys-353 forms a Glycyl lysine isopeptide (Lys-Gly) (interchain with G-Cter in SUMO2); alternate linkage. A Glycyl lysine isopeptide (Lys-Gly) (interchain with G-Cter in SUMO2) cross-link involves residue Lys-380. Tyr-398 is subject to Phosphotyrosine; by BTK. Ser-412 carries the post-translational modification Phosphoserine; by PKG/PRKG1. A Glycyl lysine isopeptide (Lys-Gly) (interchain with G-Cter in SUMO2) cross-link involves residue Lys-435. Lys-450 carries the post-translational modification N6-acetyllysine; alternate. Residue Lys-450 forms a Glycyl lysine isopeptide (Lys-Gly) (interchain with G-Cter in SUMO2); alternate linkage. Glycyl lysine isopeptide (Lys-Gly) (interchain with G-Cter in SUMO2) cross-links involve residues Lys-456, Lys-488, and Lys-494. The stretch at 457 to 551 is one GTF2I-like 3 repeat; the sequence is EEWYARITKL…ELLTHSTTEV (95 aa). Phosphotyrosine; by BTK is present on Tyr-503. Ser-517 carries the post-translational modification Phosphoserine. Lys-526 is covalently cross-linked (Glycyl lysine isopeptide (Lys-Gly) (interchain with G-Cter in SUMO2)). 2 positions are modified to phosphothreonine: Thr-556 and Thr-558. A Glycyl lysine isopeptide (Lys-Gly) (interchain with G-Cter in SUMO2) cross-link involves residue Lys-561. The GTF2I-like 4 repeat unit spans residues 562–656; that stretch reads EDWNVRITKL…ELVISYLPPG (95 aa). Residues Lys-660 and Lys-664 each participate in a glycyl lysine isopeptide (Lys-Gly) (interchain with G-Cter in SUMO2) cross-link. 2 disordered regions span residues 662 to 681 and 687 to 714; these read NTKA…NSKV and TVEG…NVPF. Ser-668 is subject to Phosphoserine. Lys-670 is covalently cross-linked (Glycyl lysine isopeptide (Lys-Gly) (interchain with G-Cter in SUMO2)). Ser-674 is modified (phosphoserine). A Glycyl lysine isopeptide (Lys-Gly) (interchain with G-Cter in SUMO2) cross-link involves residue Lys-680. The span at 690–711 shows a compositional bias: polar residues; it reads GPNNNNPQTSAVRTPTQTNGSN. Lys-715 carries the post-translational modification N6-acetyllysine; alternate. Lys-715 participates in a covalent cross-link: Glycyl lysine isopeptide (Lys-Gly) (interchain with G-Cter in SUMO2); alternate. Ser-722 carries the post-translational modification Phosphoserine. A GTF2I-like 5 repeat occupies 724 to 818; that stretch reads EAWNAKITDL…EMFETAIKES (95 aa). Ser-784 is modified (phosphoserine; by PKG/PRKG1). Lys-816 is covalently cross-linked (Glycyl lysine isopeptide (Lys-Gly) (interchain with G-Cter in SUMO2)). Residues 816–836 form a disordered region; it reads KESTSSKSPPRKINSSPNVNT. Residue Ser-823 is modified to Phosphoserine. Glycyl lysine isopeptide (Lys-Gly) (interchain with G-Cter in SUMO2) cross-links involve residues Lys-827, Lys-861, Lys-864, Lys-879, and Lys-891. One copy of the GTF2I-like 6 repeat lies at 859–953; the sequence is LSKVEKARQL…FPGLVINNQL (95 aa). The interval 958-998 is disordered; the sequence is ESEGPVIQESAEPSQLEVPATEEIKETDGSSQIKQEPDPTW. Lys-991 is covalently cross-linked (Glycyl lysine isopeptide (Lys-Gly) (interchain with G-Cter in SUMO2); alternate). A Glycyl lysine isopeptide (Lys-Gly) (interchain with G-Cter in SUMO1); alternate cross-link involves residue Lys-991.

The protein belongs to the TFII-I family. As to quaternary structure, homodimer (Potential). Interacts with SRF and PHOX1. Binds a pyrimidine-rich initiator (Inr) and a recognition site (E-box) for upstream stimulatory factor 1 (USF1). Associates with the PH domain of Bruton's tyrosine kinase (BTK). May be a component of a BHC histone deacetylase complex that contains HDAC1, HDAC2, HMG20B/BRAF35, KDM1A, RCOR1/CoREST, PHF21A/BHC80, ZMYM2, ZNF217, ZMYM3, GSE1 and GTF2I. Interacts with BTK and ARID3A. Interacts with isoform beta of PRKG1. Interacts with GPR50 (C-TERMINAL DOMAIN). Post-translationally, transiently phosphorylated on tyrosine residues by BTK in response to B-cell receptor stimulation. Phosphorylation on Tyr-248 and Tyr-398, and perhaps, on Tyr-503 contributes to BTK-mediated transcriptional activation. In terms of processing, sumoylated. Ubiquitous. Isoform 1 is strongly expressed in fetal brain, weakly in adult brain, muscle, and lymphoblasts and is almost undetectable in other adult tissues, while the other isoforms are equally expressed in all adult tissues.

The protein resides in the cytoplasm. It localises to the nucleus. Interacts with the basal transcription machinery by coordinating the formation of a multiprotein complex at the C-FOS promoter, and linking specific signal responsive activator complexes. Promotes the formation of stable high-order complexes of SRF and PHOX1 and interacts cooperatively with PHOX1 to promote serum-inducible transcription of a reporter gene deriven by the C-FOS serum response element (SRE). Acts as a coregulator for USF1 by binding independently two promoter elements, a pyrimidine-rich initiator (Inr) and an upstream E-box. Required for the formation of functional ARID3A DNA-binding complexes and for activation of immunoglobulin heavy-chain transcription upon B-lymphocyte activation. In Homo sapiens (Human), this protein is General transcription factor II-I (GTF2I).